The sequence spans 104 residues: Protein Rev (104 aa).

Ser5 is modified (phosphoserine; by host CK2). The interval 18-26 (VIKILYQSN) is homomultimerization. The segment covering 25-34 (SNPYPNSKGT) has biased composition (polar residues). Disordered stretches follow at residues 25 to 48 (SNPY…WRAR) and 63 to 104 (CLGG…ATTE). The Nuclear localization signal and RNA-binding (RRE) motif lies at 34 to 50 (TRQARRNRRRRWRARQR). Positions 35-48 (RQARRNRRRRWRAR) are enriched in basic residues. Over residues 67–77 (PPEPVDLPLPP) the composition is skewed to pro residues. The Nuclear export signal and binding to XPO1 motif lies at 73–84 (LPLPPLDRLTLD). The segment covering 91 to 104 (TPGTESQQGTATTE) has biased composition (polar residues).

Belongs to the HIV-1 REV protein family. Homomultimer; when bound to the RRE. Multimeric assembly is essential for activity and may involve XPO1. Binds to human KPNB1, XPO1, TNPO1, RANBP5 and IPO7. Interacts with the viral Integrase. Interacts with human KHDRBS1. Interacts with human NAP1; this interaction decreases Rev multimerization and stimulates its activity. Interacts with human DEAD-box helicases DDX3 and DDX24; these interactions may serve for viral RNA export to the cytoplasm and packaging, respectively. Interacts with human PSIP1; this interaction may inhibit HIV-1 DNA integration by promoting dissociation of the Integrase-LEDGF/p75 complex. Asymmetrically arginine dimethylated at one site by host PRMT6. Methylation impairs the RNA-binding activity and export of viral RNA from the nucleus to the cytoplasm. Post-translationally, phosphorylated by protein kinase CK2. Presence of, and maybe binding to the N-terminus of the regulatory beta subunit of CK2 is necessary for CK2-mediated Rev's phosphorylation.

It is found in the host nucleus. Its subcellular location is the host nucleolus. The protein resides in the host cytoplasm. Functionally, escorts unspliced or incompletely spliced viral pre-mRNAs (late transcripts) out of the nucleus of infected cells. These pre-mRNAs carry a recognition sequence called Rev responsive element (RRE) located in the env gene, that is not present in fully spliced viral mRNAs (early transcripts). This function is essential since most viral proteins are translated from unspliced or partially spliced pre-mRNAs which cannot exit the nucleus by the pathway used by fully processed cellular mRNAs. Rev itself is translated from a fully spliced mRNA that readily exits the nucleus. Rev's nuclear localization signal (NLS) binds directly to KPNB1/Importin beta-1 without previous binding to KPNA1/Importin alpha-1. KPNB1 binds to the GDP bound form of RAN (Ran-GDP) and targets Rev to the nucleus. In the nucleus, the conversion from Ran-GDP to Ran-GTP dissociates Rev from KPNB1 and allows Rev's binding to the RRE in viral pre-mRNAs. Rev multimerization on the RRE via cooperative assembly exposes its nuclear export signal (NES) to the surface. Rev can then form a complex with XPO1/CRM1 and Ran-GTP, leading to nuclear export of the complex. Conversion from Ran-GTP to Ran-GDP mediates dissociation of the Rev/RRE/XPO1/RAN complex, so that Rev can return to the nucleus for a subsequent round of export. Beside KPNB1, also seems to interact with TNPO1/Transportin-1, RANBP5/IPO5 and IPO7/RANBP7 for nuclear import. The nucleoporin-like HRB/RIP is an essential cofactor that probably indirectly interacts with Rev to release HIV RNAs from the perinuclear region to the cytoplasm. This Human immunodeficiency virus type 1 group N (isolate YBF30) (HIV-1) protein is Protein Rev.